The primary structure comprises 145 residues: Hemoglobin subunit beta (145 aa).

Residues 1–145 (MLTSEEKAAV…VANALAHRYH (145 aa)) form the Globin domain. Position 11 is a phosphothreonine (T11). K58 is modified (N6-acetyllysine). H62 lines the heme b pocket. The residue at position 81 (K81) is an N6-acetyllysine. Residue H91 participates in heme b binding. C92 carries the post-translational modification S-nitrosocysteine.

It belongs to the globin family. Heterotetramer of two alpha chains and two beta chains. Red blood cells.

Involved in oxygen transport from the lung to the various peripheral tissues. In Rangifer tarandus (Reindeer), this protein is Hemoglobin subunit beta (HBB).